Here is a 281-residue protein sequence, read N- to C-terminus: NADH-cytochrome b5 reductase 1 (281 aa).

A helical membrane pass occupies residues 2-22; the sequence is VPGKFIFTATFVLLCTIIAVV. The FAD-binding FR-type domain maps to 37 to 141; sequence EKLQEFPLVA…RGPKGFYHYQ (105 aa). FAD-binding positions include 121-136 and 147-179; these read AQLN…GPKG and EIGM…KVSL.

Belongs to the flavoprotein pyridine nucleotide cytochrome reductase family. Monomer. Component of the 2-(3-amino-3-carboxypropyl)histidine synthase complex composed of DPH1, DPH2, DPH3 and a NADH-dependent reductase, predominantly CBR1. FAD is required as a cofactor.

The protein resides in the mitochondrion outer membrane. The catalysed reaction is 2 Fe(III)-[cytochrome b5] + NADH = 2 Fe(II)-[cytochrome b5] + NAD(+) + H(+). It catalyses the reaction 2 Fe(3+)-[Dph3] + NADH = 2 Fe(2+)-[Dph3] + NAD(+) + H(+). The protein operates within protein modification; peptidyl-diphthamide biosynthesis. NADH-dependent reductase for DPH3 and cytochrome b5. Required for the first step of diphthamide biosynthesis, a post-translational modification of histidine which occurs in elongation factor 2. DPH1 and DPH2 transfer a 3-amino-3-carboxypropyl (ACP) group from S-adenosyl-L-methionine (SAM) to a histidine residue, the reaction is assisted by a reduction system comprising DPH3 and a NADH-dependent reductase, predominantly CBR1. By reducing DPH3, also involved in the formation of the tRNA wobble base modification mcm5s 2U (5-methoxycarbonylmethyl-2-thiouridine), mediated by the elongator complex. The cytochrome b5/NADH cytochrome b5 reductase electron transfer system supports the catalytic activity of several sterol biosynthetic enzymes. This Kluyveromyces lactis (strain ATCC 8585 / CBS 2359 / DSM 70799 / NBRC 1267 / NRRL Y-1140 / WM37) (Yeast) protein is NADH-cytochrome b5 reductase 1 (CBR1).